The chain runs to 143 residues: Cytochrome c-type biogenesis protein CcmE (143 aa).

At M1–K8 the chain is on the cytoplasmic side. A helical; Signal-anchor for type II membrane protein membrane pass occupies residues L9–A29. The Periplasmic portion of the chain corresponds to L30–Q143. Positions 124 and 128 each coordinate heme.

This sequence belongs to the CcmE/CycJ family.

The protein localises to the cell inner membrane. In terms of biological role, heme chaperone required for the biogenesis of c-type cytochromes. Transiently binds heme delivered by CcmC and transfers the heme to apo-cytochromes in a process facilitated by CcmF and CcmH. The protein is Cytochrome c-type biogenesis protein CcmE of Legionella pneumophila.